We begin with the raw amino-acid sequence, 38 residues long: Odorant-binding protein 2 (38 aa).

This sequence belongs to the calycin superfamily. Lipocalin family. Nasal mucosa.

It is found in the secreted. The protein resides in the extracellular space. This soluble protein may play a specific role in odor discrimination and perception. The chain is Odorant-binding protein 2 from Hystrix cristata (North African crested porcupine).